The primary structure comprises 616 residues: Glutamine--fructose-6-phosphate aminotransferase [isomerizing] (616 aa).

The Nucleophile; for GATase activity role is filled by cysteine 2. The 221-residue stretch at 2–222 (CGIIGYSGPR…QERIVALSGD (221 aa)) folds into the Glutamine amidotransferase type-2 domain. The interval 70–89 (TGIGHTRWATHGEPSDRNAH) is disordered. SIS domains are found at residues 289-428 (IRDD…LRGF) and 461-606 (LAHW…VDRP). Lysine 611 serves as the catalytic For Fru-6P isomerization activity.

Homodimer.

The protein resides in the cytoplasm. It catalyses the reaction D-fructose 6-phosphate + L-glutamine = D-glucosamine 6-phosphate + L-glutamate. In terms of biological role, catalyzes the first step in hexosamine metabolism, converting fructose-6P into glucosamine-6P using glutamine as a nitrogen source. In Tropheryma whipplei (strain Twist) (Whipple's bacillus), this protein is Glutamine--fructose-6-phosphate aminotransferase [isomerizing].